The following is a 1076-amino-acid chain: Vacuolar membrane protease (1076 aa).

The Cytoplasmic portion of the chain corresponds to 1–11 (MKCYNPSAFVP). A helical transmembrane segment spans residues 12 to 32 (MAVTLVTVVIYLGVFIPLLII). Residues 33 to 437 (HETVPSAPDD…TVFAVFRLRT (405 aa)) are Vacuolar-facing. Residues Asn50, Asn99, and Asn156 are each glycosylated (N-linked (GlcNAc...) asparagine). 2 residues coordinate Zn(2+): His220 and Asp232. The active-site Proton acceptor is the Glu266. 3 residues coordinate Zn(2+): Glu267, Glu292, and His364. A helical membrane pass occupies residues 438–458 (LFAWSLTLLIASPLILFAVSY). The Cytoplasmic portion of the chain corresponds to 459–491 (LLNRQEKFYFFAGSIKSKNPEDEPISLGGWRGA). Residues 492–512 (FRFPITLFITSAITFACASLI) traverse the membrane as a helical segment. Over 513–525 (NKINPMIIYSSPY) the chain is Vacuolar. Residues 526–546 (AVWSMSATLFFSVFWFIMAGC) traverse the membrane as a helical segment. The Cytoplasmic segment spans residues 547 to 556 (NFVRPSALQR). Residues 557 to 577 (GYAFMWMFVFGWILLVVATVY) traverse the membrane as a helical segment. Residues 578-584 (EDRFKIS) lie on the Vacuolar side of the membrane. Residues 585–605 (GGYLFVFYEAAIFLATLIAIC) traverse the membrane as a helical segment. Residues 606–738 (EQFALPRKST…LPIWTWLVQY (133 aa)) lie on the Cytoplasmic side of the membrane. Disordered stretches follow at residues 619–662 (DSQN…EETV) and 701–720 (SYDG…HPYG). A compositionally biased stretch (basic and acidic residues) spans 621–632 (QNDHSDNQDHHH). The span at 647–660 (PNADDEAAEEDQEE) shows a compositional bias: acidic residues. Residues 739–759 (LLVGPFILVILGQVGLFLVAA) form a helical membrane-spanning segment. Residues 760–771 (LHQTGTDGSPLF) are Vacuolar-facing. Residues 772-792 (LPYLIVAIFSILLLLPVTPFI) traverse the membrane as a helical segment. Residues 793 to 799 (HRLTHHM) are Cytoplasmic-facing. Residues 800–820 (PTFFFLVFIGTLIYNLVAFPF) traverse the membrane as a helical segment. Residues 821 to 1076 (SPNNRYKAYF…LGLAFLLAYV (256 aa)) are Vacuolar-facing. Asn912 carries N-linked (GlcNAc...) asparagine glycosylation.

The protein belongs to the peptidase M28 family. Requires Zn(2+) as cofactor.

Its subcellular location is the vacuole membrane. May be involved in vacuolar sorting and osmoregulation. This chain is Vacuolar membrane protease, found in Sclerotinia sclerotiorum (strain ATCC 18683 / 1980 / Ss-1) (White mold).